We begin with the raw amino-acid sequence, 107 residues long: Putative double-stranded DNA mimic protein HS_0995 (107 aa).

This sequence belongs to the putative dsDNA mimic protein family.

In terms of biological role, may act as a double-stranded DNA (dsDNA) mimic. Probably regulates the activity of a dsDNA-binding protein. The chain is Putative double-stranded DNA mimic protein HS_0995 from Histophilus somni (strain 129Pt) (Haemophilus somnus).